A 350-amino-acid polypeptide reads, in one-letter code: tRNA N6-adenosine threonylcarbamoyltransferase (350 aa).

Residues His113 and His117 each contribute to the Fe cation site. Substrate is bound by residues 135–139, Asp169, Gly182, Asp186, and Asn282; that span reads LVSGG. Asp310 is a binding site for Fe cation.

It belongs to the KAE1 / TsaD family. Requires Fe(2+) as cofactor.

The protein localises to the cytoplasm. It catalyses the reaction L-threonylcarbamoyladenylate + adenosine(37) in tRNA = N(6)-L-threonylcarbamoyladenosine(37) in tRNA + AMP + H(+). Required for the formation of a threonylcarbamoyl group on adenosine at position 37 (t(6)A37) in tRNAs that read codons beginning with adenine. Is involved in the transfer of the threonylcarbamoyl moiety of threonylcarbamoyl-AMP (TC-AMP) to the N6 group of A37, together with TsaE and TsaB. TsaD likely plays a direct catalytic role in this reaction. The chain is tRNA N6-adenosine threonylcarbamoyltransferase from Corynebacterium diphtheriae (strain ATCC 700971 / NCTC 13129 / Biotype gravis).